The sequence spans 662 residues: Methyl-accepting chemotaxis protein TlpA (662 aa).

At 1–16 the chain is on the cytoplasmic side; that stretch reads MKKTLTTIRRSSIARR. The chain crosses the membrane as a helical span at residues 17-37; that stretch reads LIISFLLILIVPITALSVSAY. Residues 38-281 lie on the Extracellular side of the membrane; sequence QSAVASLDVQ…IHDAASRVLI (244 aa). The Cache domain occupies 152–228; the sequence is VTEPYESISS…KAGTELKGDW (77 aa). A helical transmembrane segment spans residues 282 to 302; that stretch reads MASIVLAIAIGAGMTAIYFVI. The HAMP domain maps to 303-355; the sequence is RSITKPLRRIVASAEKISEGDLTETIEINSKDELGVLSESFNHMAHSLRSLIH. Residues 303-662 lie on the Cytoplasmic side of the membrane; that stretch reads RSITKPLRRI…DLTKQFKVDK (360 aa). 4 positions are modified to glutamate methyl ester (Glu): Glu370, Glu594, Glu629, and Glu636. Residues 374-610 form the Methyl-accepting transducer domain; the sequence is SADQTSRATE…EISAASNDIT (237 aa).

Belongs to the methyl-accepting chemotaxis (MCP) protein family. Interacts with YabA.

It localises to the cell membrane. Its function is as follows. Chemotactic-signal transducers respond to changes in the concentration of attractants and repellents in the environment, transduce a signal from the outside to the inside of the cell, and facilitate sensory adaptation through the variation of the level of methylation. All amino acids serve as attractants in B.subtilis, they appear to cause an increase in the turnover methyl groups, leading to methylation of an unidentified acceptor, while repellents have been shown to cause a decrease in methyl group turnover. The methyl groups are added by a methyltransferase and removed by a methylesterase. This is Methyl-accepting chemotaxis protein TlpA from Bacillus subtilis (strain 168).